Here is a 406-residue protein sequence, read N- to C-terminus: Cysteine desulfurase (406 aa).

K226 is subject to N6-(pyridoxal phosphate)lysine. Catalysis depends on C364, which acts as the Cysteine persulfide intermediate.

The protein belongs to the class-V pyridoxal-phosphate-dependent aminotransferase family. Csd subfamily. As to quaternary structure, homodimer. Interacts with SufE and the SufBCD complex composed of SufB, SufC and SufD. The interaction with SufE is required to mediate the direct transfer of the sulfur atom from the S-sulfanylcysteine. Requires pyridoxal 5'-phosphate as cofactor.

It is found in the cytoplasm. It carries out the reaction (sulfur carrier)-H + L-cysteine = (sulfur carrier)-SH + L-alanine. The catalysed reaction is L-selenocysteine + AH2 = hydrogenselenide + L-alanine + A + H(+). It functions in the pathway cofactor biosynthesis; iron-sulfur cluster biosynthesis. In terms of biological role, cysteine desulfurases mobilize the sulfur from L-cysteine to yield L-alanine, an essential step in sulfur metabolism for biosynthesis of a variety of sulfur-containing biomolecules. Component of the suf operon, which is activated and required under specific conditions such as oxidative stress and iron limitation. Acts as a potent selenocysteine lyase in vitro, that mobilizes selenium from L-selenocysteine. Selenocysteine lyase activity is however unsure in vivo. The chain is Cysteine desulfurase from Cronobacter sakazakii (strain ATCC BAA-894) (Enterobacter sakazakii).